We begin with the raw amino-acid sequence, 143 residues long: NADH-quinone oxidoreductase subunit A (143 aa).

The next 3 helical transmembrane spans lie at 7–27 (GFGN…GGYL), 63–83 (FYVV…LYPW), and 93–113 (FALF…AYAW).

The protein belongs to the complex I subunit 3 family. NDH-1 is composed of 14 different subunits. Subunits NuoA, H, J, K, L, M, N constitute the membrane sector of the complex.

The protein localises to the cell inner membrane. It catalyses the reaction a quinone + NADH + 5 H(+)(in) = a quinol + NAD(+) + 4 H(+)(out). In terms of biological role, NDH-1 shuttles electrons from NADH, via FMN and iron-sulfur (Fe-S) centers, to quinones in the respiratory chain. The immediate electron acceptor for the enzyme in this species is believed to be a menaquinone. Couples the redox reaction to proton translocation (for every two electrons transferred, four hydrogen ions are translocated across the cytoplasmic membrane), and thus conserves the redox energy in a proton gradient. The protein is NADH-quinone oxidoreductase subunit A of Chlorobium limicola (strain DSM 245 / NBRC 103803 / 6330).